Consider the following 998-residue polypeptide: MTLKVILGEHQITRTELLVGIATVSGCGAVVYCISKFWGYGAIAPYPQSGGNRVTRALQRAVIDKTKTPIETRFYPLDSLRTVTPKRVADNGHAVSGAVRDAARRLIDESITAVGGSKFEVNPNPNSSTGLRNHFHFAVGDLAQDFRNDTPADDAFIVGVDVDYYVTEPDVLLEHMRPVVLHTFNPKKVSGFDADSPFTIKNNLVEYKVSGGAAWVHPVWDWCEAGEFIASRVRTSWKEWFLQLPLRMIGLEKVGYHKIHHCRPWTDCPDRALVYTIPQYVIWRFNWIDTELHVRKLKRIEYQDETKPGWNRLEYVTDKNELLVSIGREGEHAQITIEKEKLDMLSGLSATQSVNARLIGMGHKDPQYTSMIVQYYTGKKVVSPISPTVYKPTMPRVHWPVTSDADVPEVSARQYTLPIVSDCMMMPMIKRWETMSESIERRVTFVANDKKPSDRIAKIAETFVKLMNGPFKDLDPLSIEETIERLNKPSQQLQLRAVFEMIGVKPRQLIESFNKNEPGMKSSRIISGFPDILFILKVSRYTLAYSDIVLHAEHNEHWYYPGRNPTEIADGVCEFVSDCDAEVIETDFSNLDGRVSSWMQRNIAQKAMVQAFRPEYRDEIISFMDTIINCPAKAKRFGFRYEPGVGVKSGSPTTTPHNTQYNGCVEFTALTFEHPDAEPEDLFRLIGPKCGDDGLSRAIIQKSINRAAKCFGLELKVERYNPEIGLCFLSRVFVDPLATTTTIQDPLRTLRKLHLTTRDPTIPLADAACDRVEGYLCTDALTPLISDYCKMVLRLYGPTASTEQVRNQRRSRNKEKPYWLTCDGSWPQHPQDAHLMKQVLIKRTAIDEDQVDALIGRFAAMKDVWEKITHDSEESAAACTFDEDGVAPNSVDESLPMLNDAKQTRANPGTSRPHSNGGGSSHGNELPRRTEQRAQGPRQPARLPKQGKTNGKSDGNITAGETQRGGIPRGKGPRGGKTNTRRTPPKAGAQPQPSNNRK.

2 interaction with host mitochondria outer membrane regions span residues 1–67 and 233–250; these read MTLK…DKTK and VRTS…RMIG. A homomultimerization region spans residues 1–400; that stretch reads MTLKVILGEH…KPTMPRVHWP (400 aa). Residues 17–34 form a helical membrane-spanning segment; it reads LLVGIATVSGCGAVVYCI. The tract at residues 35–998 is cytoplasmic; the sequence is SKFWGYGAIA…AQPQPSNNRK (964 aa). The segment at 91-282 is capping; sequence NGHAVSGAVR…LVYTIPQYVI (192 aa). The For RdRp/TNTase activity role is filled by Asp-692. Positions 700-800 are homomultimerization; it reads IQKSINRAAK…MVLRLYGPTA (101 aa). Residues 901–998 form a disordered region; it reads AKQTRANPGT…AQPQPSNNRK (98 aa). Composition is skewed to polar residues over residues 904–913 and 947–961; these read TRANPGTSRP and GKTN…TAGE. Over residues 971-984 the composition is skewed to basic residues; it reads KGPRGGKTNTRRTP.

The protein belongs to the nodaviridae RNA polymerase family. In terms of assembly, homododecamer. Forms 2 stacked rings of 35-nm in diameter, arranged in a crown-like structure at the opening of virus-induced replication vesicles. Interacts with protein B2. Mn(2+) is required as a cofactor.

The protein localises to the host mitochondrion outer membrane. It catalyses the reaction RNA(n) + a ribonucleoside 5'-triphosphate = RNA(n+1) + diphosphate. Drastically inhibited by phosphonoacetic acid. Only slightly inhibited by gliotoxin. Its function is as follows. RNA-dependent RNA polymerase, which replicates the viral genome composed of 2 RNA segments, RNA1 and RNA2. Does not need an exogenous primer. Also possesses a terminal nucleotidyl transferase (TNTase) activity. The TNTase catalyzes the addition of nucleotide to the 3'-end of plus- and minus-stranded RNAs, probably to repair the 3'-end nucleotide loss. Forms the open necked connection to the cytosol of the virus-induced replication vesicles. Mediates viral RNA1 recruitment. This Costelytra zealandica (Greater wax moth) protein is RNA-directed RNA polymerase.